A 113-amino-acid chain; its full sequence is Protein C21/B27 (113 aa).

The polypeptide is Protein C21/B27 (Homo sapiens (Human)).